The sequence spans 259 residues: Ribonuclease HII (259 aa).

In terms of domain architecture, RNase H type-2 spans Thr70–Glu258. Residues Asp76, Glu77, and Asp168 each contribute to the a divalent metal cation site.

Belongs to the RNase HII family. Mn(2+) serves as cofactor. Mg(2+) is required as a cofactor.

The protein localises to the cytoplasm. It carries out the reaction Endonucleolytic cleavage to 5'-phosphomonoester.. Functionally, endonuclease that specifically degrades the RNA of RNA-DNA hybrids. This is Ribonuclease HII from Streptococcus pneumoniae serotype 2 (strain D39 / NCTC 7466).